Consider the following 269-residue polypeptide: Putative 6-phosphogluconolactonase (269 aa).

Positions aspartate 248–glycine 269 are disordered.

Belongs to the glucosamine/galactosamine-6-phosphate isomerase family. 6-phosphogluconolactonase subfamily.

The protein localises to the nucleus. It carries out the reaction 6-phospho-D-glucono-1,5-lactone + H2O = 6-phospho-D-gluconate + H(+). The protein operates within carbohydrate degradation; pentose phosphate pathway; D-ribulose 5-phosphate from D-glucose 6-phosphate (oxidative stage): step 2/3. In terms of biological role, hydrolysis of 6-phosphogluconolactone to 6-phosphogluconate. This Caenorhabditis elegans protein is Putative 6-phosphogluconolactonase.